Reading from the N-terminus, the 239-residue chain is MGQKINPLGFRLGTTQKHHSFWFAQPKNYSEGLQEDKKIRNCIKNYIQKNRKKGSNRKIESDSSSEVITHNRKTDSGSSSEVITRIEIQKEIDTIHVIIHIGFPNLLKKKGAIEELEKDLQKEIHSVNQRLNISIEKVKEPYREPNILAEYIAFQLKNRVSFRKAMKKAIELTKKADIRGVKVKIAGRLGGKEIARAECIKKGRLPLQTIRAKIDYCCYPIRTIYGVLGVKIWIFVDEE.

The KH type-2 domain maps to 43–139 (IKNYIQKNRK…RLNISIEKVK (97 aa)). The tract at residues 50–80 (NRKKGSNRKIESDSSSEVITHNRKTDSGSSS) is disordered.

This sequence belongs to the universal ribosomal protein uS3 family. As to quaternary structure, part of the 30S ribosomal subunit.

It is found in the plastid. Its subcellular location is the chloroplast. This is Small ribosomal subunit protein uS3c (rps3) from Agrostis stolonifera (Creeping bentgrass).